Reading from the N-terminus, the 259-residue chain is Flap endonuclease Xni (259 aa).

Asp-109 lines the Mg(2+) pocket. The 91-residue stretch at 165 to 255 (VKPQQLSDYW…FNLQDLRFTA (91 aa)) folds into the 5'-3' exonuclease domain. Positions 176, 187, and 190 each coordinate K(+). An interaction with DNA region spans residues 189–194 (GIGPKA).

It belongs to the Xni family. It depends on Mg(2+) as a cofactor. K(+) is required as a cofactor.

Its function is as follows. Has flap endonuclease activity. During DNA replication, flap endonucleases cleave the 5'-overhanging flap structure that is generated by displacement synthesis when DNA polymerase encounters the 5'-end of a downstream Okazaki fragment. The polypeptide is Flap endonuclease Xni (Vibrio vulnificus (strain YJ016)).